A 54-amino-acid chain; its full sequence is Light-harvesting protein B-870 beta chain (54 aa).

At 1-20 (EVKQESLSGITEGEAKEFHK) the chain is on the cytoplasmic side. Residues His19 and His37 each contribute to the a bacteriochlorophyll site. A helical membrane pass occupies residues 21 to 43 (IFTSSILVFFGVAAFAHLLVWIW). At 44–54 (RPWVPGPNGYS) the chain is on the periplasmic side.

It belongs to the antenna complex beta subunit family. In terms of assembly, the core complex is formed by different alpha and beta chains, binding bacteriochlorophyll molecules, and arranged most probably in tetrameric structures disposed around the reaction center. The non-pigmented gamma chains may constitute additional components.

Its subcellular location is the cell inner membrane. Its function is as follows. Antenna complexes are light-harvesting systems, which transfer the excitation energy to the reaction centers. In Rhodospirillum rubrum, this protein is Light-harvesting protein B-870 beta chain.